We begin with the raw amino-acid sequence, 947 residues long: Bifunctional glutamine synthetase adenylyltransferase/adenylyl-removing enzyme (947 aa).

Residues 1-440 (MTPLSSPLSQ…VFNELIGDDE (440 aa)) form an adenylyl removase region. The segment at 450-947 (SEPWREVWQD…ASWRKWLVAV (498 aa)) is adenylyl transferase.

The protein belongs to the GlnE family. Mg(2+) is required as a cofactor.

It carries out the reaction [glutamine synthetase]-O(4)-(5'-adenylyl)-L-tyrosine + phosphate = [glutamine synthetase]-L-tyrosine + ADP. The enzyme catalyses [glutamine synthetase]-L-tyrosine + ATP = [glutamine synthetase]-O(4)-(5'-adenylyl)-L-tyrosine + diphosphate. Functionally, involved in the regulation of glutamine synthetase GlnA, a key enzyme in the process to assimilate ammonia. When cellular nitrogen levels are high, the C-terminal adenylyl transferase (AT) inactivates GlnA by covalent transfer of an adenylyl group from ATP to specific tyrosine residue of GlnA, thus reducing its activity. Conversely, when nitrogen levels are low, the N-terminal adenylyl removase (AR) activates GlnA by removing the adenylyl group by phosphorolysis, increasing its activity. The regulatory region of GlnE binds the signal transduction protein PII (GlnB) which indicates the nitrogen status of the cell. This Salmonella agona (strain SL483) protein is Bifunctional glutamine synthetase adenylyltransferase/adenylyl-removing enzyme.